The sequence spans 178 residues: Small ribosomal subunit protein uS5 (178 aa).

One can recognise an S5 DRBM domain in the interval 15 to 78 (FEEKIIEIRR…ADAKKNVIEV (64 aa)).

This sequence belongs to the universal ribosomal protein uS5 family. Part of the 30S ribosomal subunit. Contacts proteins S4 and S8.

Functionally, with S4 and S12 plays an important role in translational accuracy. Located at the back of the 30S subunit body where it stabilizes the conformation of the head with respect to the body. The polypeptide is Small ribosomal subunit protein uS5 (Thermotoga neapolitana (strain ATCC 49049 / DSM 4359 / NBRC 107923 / NS-E)).